Consider the following 162-residue polypeptide: MAETVADTRRLITKPQNLNDAYGPPSNFLEIDVSNPQTVGVGRGRFTTYEIRVKTNLPIFKLKESTVRRRYSDFEWLRSELERESKVVVPPLPGKAFLRQLPFRGDDGIFDDNFIEERKQGLEQFINKVAGHPLAQNERCLHMFLQDEIIDKSYTPSKIRHA.

At Ala2 the chain carries N-acetylalanine. Positions 27 to 151 constitute a PX domain; the sequence is NFLEIDVSNP…HMFLQDEIID (125 aa). The residue at position 43 (Arg43) is an Omega-N-methylarginine. A 1,2-diacyl-sn-glycero-3-phospho-(1D-myo-inositol-3-phosphate) is bound by residues Arg70, Ser72, Lys95, and Arg118. At Ser72 the chain carries Phosphoserine. Lys95 participates in a covalent cross-link: Glycyl lysine isopeptide (Lys-Gly) (interchain with G-Cter in SUMO2). The tract at residues 147–162 is binds predominantly to PtdIns(P5) and weaker to PtdIns(P3) abd PtdIns(P4); involved in neurite outgrowth regulation; sequence DEIIDKSYTPSKIRHA.

The protein belongs to the sorting nexin family. As to quaternary structure, interacts with VPS26A, VPS29 and VPS35; the interaction with VPS35 is direct. The association with the retromer CSC subcomplex subunits is proposed to represent a functional distinct retromer variant described as SNX3-retromer complex. Interacts with USP10 and SCNN1A. Interacts with TRFC. Interacts with SNX8; 2 molecules of SNX8 seems to associate with one molecule of SNX3. Interacts with PTPRU. Interacts with MON2 and DOP1B. In terms of processing, ubiquitinated, leading to its proteasomal degradation. Deubiquitinated by USP10.

It is found in the early endosome. Its subcellular location is the cytoplasmic vesicle. The protein localises to the phagosome. Functionally, phosphoinositide-binding protein required for multivesicular body formation. Specifically binds phosphatidylinositol 3-phosphate (PtdIns(P3)). Can also bind phosphatidylinositol 4-phosphate (PtdIns(P4)), phosphatidylinositol 5-phosphate (PtdIns(P5)) and phosphatidylinositol 3,5-biphosphate (PtdIns(3,5)P2). Plays a role in protein transport between cellular compartments. Together with RAB7A facilitates endosome membrane association of the retromer cargo-selective subcomplex (CSC/VPS). May in part act as component of the SNX3-retromer complex which mediates the retrograde endosome-to-TGN transport of WLS distinct from the SNX-BAR retromer pathway. Promotes stability and cell surface expression of epithelial sodium channel (ENAC) subunits SCNN1A and SCNN1G. Not involved in EGFR degradation. Involved in the regulation of phagocytosis in dendritic cells possibly by regulating EEA1 recruitment to the nascent phagosomes. Involved in iron homeostasis through regulation of endocytic recycling of the transferrin receptor TFRC presumably by delivering the transferrin:transferrin receptor complex to recycling endosomes; the function may involve the CSC retromer subcomplex. In the case of Salmonella enterica infection plays arole in maturation of the Salmonella-containing vacuole (SCV) and promotes recruitment of LAMP1 to SCVs. In Homo sapiens (Human), this protein is Sorting nexin-3.